Here is a 1071-residue protein sequence, read N- to C-terminus: SLIT-ROBO Rho GTPase-activating protein 2 (1071 aa).

The 304-residue stretch at lysine 22–aspartate 325 folds into the F-BAR domain. The span at leucine 181–threonine 203 shows a compositional bias: basic and acidic residues. The tract at residues leucine 181–alanine 211 is disordered. A Phosphoserine modification is found at serine 206. Residues glutamine 363–isoleucine 401 are a coiled coil. A phosphoserine mark is found at serine 427, serine 500, serine 691, and serine 695. The Rho-GAP domain occupies alanine 489–phenylalanine 679. A disordered region spans residues cysteine 700–aspartate 726. The segment covering glycine 705–valine 717 has biased composition (polar residues). Serine 724 is modified (phosphoserine). The region spanning cysteine 728 to threonine 787 is the SH3 domain. Serine 795 is modified (phosphoserine). Disordered stretches follow at residues serine 795 to serine 819 and arginine 838 to glutamine 918. Positions histidine 855–glycine 868 are enriched in low complexity. Polar residues-rich tracts occupy residues arginine 874–leucine 885 and glycine 897–histidine 907. Position 916 is a phosphoserine (serine 916). Arginine 927 is modified (symmetric dimethylarginine; by PRMT5). Position 930 is a phosphoserine (serine 930). Positions glutamate 940–histidine 968 form a coiled coil. The segment at proline 984–alanine 1012 is disordered. 4 positions are modified to phosphoserine: serine 990, serine 994, serine 1013, and serine 1027. A disordered region spans residues lysine 1029–valine 1071. The segment covering proline 1047–valine 1071 has biased composition (polar residues).

Homodimer. Forms a heterooligomer with SRGAP1 and SRGAP3 through its F-BAR domain. Interacts (via SH3 domain) with GPHN. Interacts (via SH3 domain) with FMNL1 (activated by RAC1); regulates the actin filament severing activity of FMNL1 and actin dynamics. Interacts (via SH3 domain) with FMNL3. Interacts with RAC1; specifically stimulates RAC1 GTPase activity. Interacts (via F-BAR domain) with HOMER1. Interacts with ROBO1 and ROBO2. Interacts with FASLG. Interacts with PRMT5. Methylation at Arg-927 is required for the stimulation of cell migration, dimerization and localization at the plasma membrane protrusions.

The protein resides in the cell membrane. It localises to the cell projection. Its subcellular location is the dendritic spine. It is found in the postsynaptic density. The protein localises to the postsynaptic cell membrane. The protein resides in the lamellipodium. It localises to the cytoplasmic vesicle. Its subcellular location is the phagosome. It is found in the nucleus. The protein localises to the cytoplasm. The protein resides in the cytosol. Its function is as follows. Postsynaptic RAC1 GTPase activating protein (GAP) that plays a key role in neuronal morphogenesis and migration mainly during development of the cerebral cortex. Regulates excitatory and inhibitory synapse maturation and density in cortical pyramidal neurons. SRGAP2/SRGAP2A limits excitatory and inhibitory synapse density through its RAC1-specific GTPase activating activity, while it promotes maturation of both excitatory and inhibitory synapses through its ability to bind to the postsynaptic scaffolding protein HOMER1 at excitatory synapses, and the postsynaptic protein GPHN at inhibitory synapses. Mechanistically, acts by binding and deforming membranes, thereby regulating actin dynamics to regulate cell migration and differentiation. Promotes cell repulsion and contact inhibition of locomotion: localizes to protrusions with curved edges and controls the duration of RAC1 activity in contact protrusions. In non-neuronal cells, may also play a role in cell migration by regulating the formation of lamellipodia and filopodia. In Mus musculus (Mouse), this protein is SLIT-ROBO Rho GTPase-activating protein 2.